Here is a 262-residue protein sequence, read N- to C-terminus: Tryptophan synthase alpha chain (262 aa).

Active-site proton acceptor residues include glutamate 49 and aspartate 60.

The protein belongs to the TrpA family. Tetramer of two alpha and two beta chains.

It catalyses the reaction (1S,2R)-1-C-(indol-3-yl)glycerol 3-phosphate + L-serine = D-glyceraldehyde 3-phosphate + L-tryptophan + H2O. It participates in amino-acid biosynthesis; L-tryptophan biosynthesis; L-tryptophan from chorismate: step 5/5. In terms of biological role, the alpha subunit is responsible for the aldol cleavage of indoleglycerol phosphate to indole and glyceraldehyde 3-phosphate. This Caldanaerobacter subterraneus subsp. tengcongensis (strain DSM 15242 / JCM 11007 / NBRC 100824 / MB4) (Thermoanaerobacter tengcongensis) protein is Tryptophan synthase alpha chain.